Consider the following 652-residue polypeptide: Apicoplast pyruvate carrier 2 (652 aa).

At 1-45 (MSAFPASPQPSAFPASPQPSAFPASPQPSASPVSPRHCVSPSSGT) the chain is on the cytoplasmic side. A disordered region spans residues 1–53 (MSAFPASPQPSAFPASPQPSAFPASPQPSASPVSPRHCVSPSSGTLPSSSSPS). Transmembrane regions (helical) follow at residues 46 to 66 (LPSS…SSSS), 126 to 146 (NLLP…AVSY), 167 to 187 (GTTL…SAWM), 189 to 209 (LGLA…IAYG), 212 to 232 (TALG…KLSP), 278 to 298 (LPYL…SSLN), 345 to 365 (LVDP…AERQ), 385 to 405 (SCSA…ICSS), 417 to 437 (LSWQ…LYPE), 445 to 465 (AAPA…PRAL), 467 to 487 (SASR…SLTG), and 515 to 535 (LWGY…MNAL). The Cytoplasmic segment spans residues 536–652 (TAPCLFALST…LPYRFPTYSP (117 aa)).

Belongs to the major facilitator superfamily. Interacts with apicoplast pyruvate carrier 1.

Its subcellular location is the plastid. It localises to the apicoplast. It is found in the membrane. Along with apicoplast pyruvate carrier 1, forms apicoplast pyruvate carrier (APC) complex, which transports pyruvate into the apicoplast and may also transport amino acids like methionine, serine, glycine and tryptophan with low efficiency. Required for maintaining pyruvate-dependent metabolic activities in the apicoplast, such as synthesis of fatty acids, isopentenyl pyrophosphate (IPP), dimethylallyl pyrophosphate (DMAPP) and methylerythritol 4-phosphate (MEP). Required for maintaining the integrity of the apicoplast. Required for normal parasite growth. The polypeptide is Apicoplast pyruvate carrier 2 (Toxoplasma gondii).